Reading from the N-terminus, the 121-residue chain is Large ribosomal subunit protein uL22 (121 aa).

Belongs to the universal ribosomal protein uL22 family. As to quaternary structure, part of the 50S ribosomal subunit.

Functionally, this protein binds specifically to 23S rRNA; its binding is stimulated by other ribosomal proteins, e.g. L4, L17, and L20. It is important during the early stages of 50S assembly. It makes multiple contacts with different domains of the 23S rRNA in the assembled 50S subunit and ribosome. The globular domain of the protein is located near the polypeptide exit tunnel on the outside of the subunit, while an extended beta-hairpin is found that lines the wall of the exit tunnel in the center of the 70S ribosome. This Kocuria rhizophila (strain ATCC 9341 / DSM 348 / NBRC 103217 / DC2201) protein is Large ribosomal subunit protein uL22.